Reading from the N-terminus, the 120-residue chain is DNA-binding protein HQ_1105A (120 aa).

Residues 1-55 (MSETPDDLDELRQQRMEELRDQADGQQSQTSDNTAAAQEAAREKAEAQQEALLKQ) form a disordered region. The segment covering 10–23 (ELRQQRMEELRDQA) has biased composition (basic and acidic residues). Residues 24 to 34 (DGQQSQTSDNT) are compositionally biased toward polar residues.

It belongs to the PDCD5 family.

This Haloquadratum walsbyi (strain DSM 16790 / HBSQ001) protein is DNA-binding protein HQ_1105A.